The chain runs to 576 residues: MGLASTVSLALLGLCSLARAQTSAADAYVSAESPIAQAGILANIGPSGSKSHGAASGVIIASPSTSNPDYLYTWTRDAALVSRALVDEFIEGESSLQSVIDSYVSSQQKLQRVDNPSGSYTSGGLGEPKFNIDLTAFTGAWGRPQRDGPALRAITLITYGNHLLSSGNTSYVTDTIWPVVKADLDYVVSYWNQTGFDLWEEVSSSSFFTTAEQHTALRLGATFATAVGASASTYLTQADNVLCFLQSYWNSNGGYATANTGGGRSGIDANTVLTSIHTFDIEAGCDSVTFQPCSDRALSNLKVYVDSFRGLYSINPTGATDPILTGRYKEDVYYNGNPWYLTTFAVAEQLYDALNTWDKLGSLDVTSTSLAFFKQFDSSITAGTYASSTSEYATLTSAIRNWADGFLEVLADFTPADGGLTEQIDKSSGNPTSAADLTWSYASAITAFKARGGAIPASWGAAGLTVPATCSTGGGGGSGGDTVAVTLNVQATTVYGENIYVTGSVNQLANWSPDNAIALNADNYPTWSVTVNLPANTQIEYKYIRKNNGQVTWESDPNRSITTSASGSFTQNDTWR.

The N-terminal stretch at methionine 1–alanine 20 is a signal peptide. Tryptophan 141 serves as a coordination point for substrate. 2 N-linked (GlcNAc...) asparagine glycosylation sites follow: asparagine 168 and asparagine 192. The active-site Proton acceptor is the aspartate 197. Residue glutamate 200 is the Proton donor of the active site. Intrachain disulfides connect cysteine 243-cysteine 470 and cysteine 285-cysteine 293. One can recognise a CBM20 domain in the interval glycine 477–arginine 576. Positions threonine 552–arginine 576 are disordered. 2 N-linked (GlcNAc...) asparagine glycosylation sites follow: asparagine 558 and asparagine 572.

The protein belongs to the glycosyl hydrolase 15 family.

It is found in the secreted. The catalysed reaction is Hydrolysis of terminal (1-&gt;4)-linked alpha-D-glucose residues successively from non-reducing ends of the chains with release of beta-D-glucose.. This is Glucoamylase ARB_02327-1 from Schizophyllum commune (strain H4-8 / FGSC 9210) (Split gill fungus).